The primary structure comprises 550 residues: Silent protein UshA(0) (550 aa).

An N-terminal signal peptide occupies residues 1 to 25 (MKFLKRGVALALLAAFALTTQPAQA). Positions 41, 43, 84, 116, 217, 252, and 254 each coordinate a divalent metal cation. Cysteine 258 and cysteine 275 are disulfide-bonded. Substrate contacts are provided by residues phenylalanine 429 and 498 to 504 (FNATGGD).

This sequence belongs to the 5'-nucleotidase family. A divalent metal cation serves as cofactor.

It is found in the periplasm. This chain is Silent protein UshA(0) (ushA), found in Salmonella typhimurium (strain LT2 / SGSC1412 / ATCC 700720).